The primary structure comprises 329 residues: Terpene synthase 7 (329 aa).

A DDxx(x)D/E motif motif is present at residues 99–104 (DDLYLE). An NDxxSxxxD/E motif motif is present at residues 230 to 238 (NDIHSFNKE).

The protein belongs to the terpene synthase family.

Its function is as follows. Terpene synthase that converts its substrate farnesyl diphosphate (FPP) into 6 yet unidentified sesquiterpenes. This is Terpene synthase 7 from Dictyostelium purpureum (Slime mold).